We begin with the raw amino-acid sequence, 80 residues long: Defensin-like protein 291 (80 aa).

Residues 1–29 (MAASKTTIFIVFVLCLSCTLLVNISGIQA) form the signal peptide. 3 disulfide bridges follow: C50/C70, C56/C75, and C62/C77.

The protein belongs to the DEFL family.

It is found in the secreted. This chain is Defensin-like protein 291, found in Arabidopsis thaliana (Mouse-ear cress).